We begin with the raw amino-acid sequence, 38 residues long: Mu/omega-theraphotoxin-Mb1a (38 aa).

3 cysteine pairs are disulfide-bonded: Cys-7-Cys-21, Cys-14-Cys-26, and Cys-20-Cys-33. Thr-38 is modified (threonine amide).

Belongs to the neurotoxin 10 (Hwtx-1) family. 28 (Jztx-11) subfamily. Expressed by the venom gland.

The protein resides in the secreted. Its function is as follows. Paralytic toxin that inhibits insect voltage-gated sodium (Nav) and calcium (Cav) channels in P.americana (American cockroach) dorsal unpaired median (DUM) neurons, and inhibits the B.germanica (German cockroach) Nav channel (BgNaV1). Also shows a delay in fast inactivation when tested on BgNaV1. May act as a gating-modifier toxin on Nav and as a pore blocker on Cav. In vivo, reversibly paralyzes both L.cuprina (Australian sheep blowfly) and M.domestica (housefly), but does not affect larvae of H.armigera (cotton bollworms). This chain is Mu/omega-theraphotoxin-Mb1a, found in Monocentropus balfouri (Socotra Island blue baboon tarantula).